The primary structure comprises 126 residues: Actin-depolymerizing factor (126 aa).

One can recognise an ADF-H domain in the interval 1–126; sequence EDNCKLKFLE…SFDIIKSRAL (126 aa).

Belongs to the actin-binding proteins ADF family. Preferentially in mature anther.

Actin-depolymerizing protein. Severs actin filaments (F-actin) and binds to actin monomers. This is Actin-depolymerizing factor from Brassica napus (Rape).